The chain runs to 78 residues: Serine rich endogenous peptide 19 (78 aa).

Residues Met1–Ala25 form the signal peptide. The SCOOP motif signature appears at Lys50–Arg64. The SxS motif essential for MIK2 binding motif lies at Ser56 to Ser58. The disordered stretch occupies residues Cys57–Pro78. The span at Asn69 to Pro78 shows a compositional bias: pro residues.

This sequence belongs to the serine rich endogenous peptide (SCOOP) phytocytokine family. Interacts with MIK2 (via extracellular leucine-rich repeat domain); this interaction triggers the formation of complex between MIK2 and the BAK1/SERK3 and SERK4 coreceptors, and subsequent BAK1 activation by phosphorylation.

Its subcellular location is the cell membrane. It localises to the secreted. The protein localises to the extracellular space. It is found in the apoplast. In terms of biological role, brassicaceae-specific phytocytokine (plant endogenous peptide released into the apoplast) perceived by MIK2 in a BAK1/SERK3 and SERK4 coreceptors-dependent manner, that modulates various physiological and antimicrobial processes including growth prevention and reactive oxygen species (ROS) response regulation. The sequence is that of Serine rich endogenous peptide 19 from Arabidopsis thaliana (Mouse-ear cress).